The following is a 2812-amino-acid chain: Zonadhesin (2812 aa).

An N-terminal signal peptide occupies residues methionine 1–phenylalanine 17. Residues arginine 18–serine 2757 lie on the Extracellular side of the membrane. 3 consecutive MAM domains span residues threonine 39–arginine 204, glutamine 209–glutamate 368, and proline 371–valine 536. The interval glutamate 61–glycine 84 is disordered. Over residues alanine 66–threonine 75 the composition is skewed to low complexity. N-linked (GlcNAc...) asparagine glycosylation is found at asparagine 333 and asparagine 493. 2 disordered regions span residues valine 545 to lysine 884 and glutamate 904 to isoleucine 929. Over residues proline 547–glycine 558 the composition is skewed to low complexity. The span at leucine 559–proline 570 shows a compositional bias: polar residues. The 66 X heptapeptide repeats (approximate) (mucin-like domain) stretch occupies residues serine 573–threonine 1041. Low complexity-rich tracts occupy residues threonine 592 to glutamate 603, threonine 651 to proline 675, serine 713 to lysine 842, serine 853 to proline 868, and serine 916 to isoleucine 929. A TIL 1 domain is found at cysteine 1044–cysteine 1093. In terms of domain architecture, VWFC 1 spans glutamate 1103–histidine 1148. N-linked (GlcNAc...) asparagine glycosylation is found at asparagine 1112 and asparagine 1188. The 178-residue stretch at alanine 1154–glutamine 1331 folds into the VWFD 1 domain. 2 disulfide bridges follow: cysteine 1156–cysteine 1291 and cysteine 1178–cysteine 1330. Positions histidine 1302–leucine 1316 are enriched in basic and acidic residues. Positions histidine 1302 to aspartate 1323 are disordered. Residues cysteine 1426–cysteine 1479 form the TIL 2 domain. Residues glycine 1480–histidine 1535 form the VWFC 2 domain. The VWFD 2 domain maps to alanine 1540–phenylalanine 1720. Disulfide bonds link cysteine 1542–cysteine 1680 and cysteine 1564–cysteine 1719. Asparagine 1685 and asparagine 1804 each carry an N-linked (GlcNAc...) asparagine glycan. In terms of domain architecture, TIL 3 spans cysteine 1812–cysteine 1867. Residues glycine 1868–arginine 1924 enclose the VWFC 3 domain. N-linked (GlcNAc...) asparagine glycans are attached at residues asparagine 1900 and asparagine 1946. The VWFD 3 domain occupies glycine 1929 to glutamine 2108. 2 cysteine pairs are disulfide-bonded: cysteine 1931–cysteine 2069 and cysteine 1953–cysteine 2107. Asparagine 2203 is a glycosylation site (N-linked (GlcNAc...) asparagine). The TIL 4 domain maps to cysteine 2211–cysteine 2267. A VWFC 4 domain is found at glycine 2268–glutamate 2329. The VWFD 4 domain maps to glutamate 2329–leucine 2505. An intrachain disulfide couples cysteine 2331 to cysteine 2468. 2 N-linked (GlcNAc...) asparagine glycosylation sites follow: asparagine 2542 and asparagine 2701. One can recognise a VWFC 5 domain in the interval cysteine 2652–arginine 2797. In terms of domain architecture, EGF-like spans proline 2708–methionine 2744. Intrachain disulfides connect cysteine 2712/cysteine 2723, cysteine 2717/cysteine 2732, and cysteine 2734/cysteine 2743. The chain crosses the membrane as a helical span at residues asparagine 2758–threonine 2778. Over arginine 2779 to cysteine 2812 the chain is Cytoplasmic.

As to quaternary structure, probably forms covalent oligomers. In terms of tissue distribution, in testis, primarily in haploid spermatids.

It localises to the cell membrane. In terms of biological role, binds in a species-specific manner to the zona pellucida of the egg. May be involved in gamete recognition and/or signaling. The sequence is that of Zonadhesin (ZAN) from Homo sapiens (Human).